Consider the following 355-residue polypeptide: Guanine nucleotide-binding protein G(o) subunit alpha (355 aa).

Residues 1 to 17 (MGCASSAEERAAPSAQQ) are compositionally biased toward low complexity. Residues 1 to 24 (MGCASSAEERAAPSAQQADREKLK) form a disordered region. Gly2 is lipidated: N-myristoyl glycine. Cys3 carries S-palmitoyl cysteine lipidation. In terms of domain architecture, G-alpha spans 32-355 (KDIKLLLLGA…ANNLRGCGLY (324 aa)). The segment at 35 to 48 (KLLLLGAGESGKST) is G1 motif. Residues 40–47 (GAGESGKS), 176–182 (LRTRVKT), 201–205 (DVGRG), 201–206 (DVGRGQ), 271–274 (NKKD), and Ala327 contribute to the GTP site. Positions 47 and 182 each coordinate Mg(2+). Residues 174-182 (DILRTRVKT) form a G2 motif region. A G3 motif region spans residues 197–206 (FKLFDVGRGQ). The G4 motif stretch occupies residues 267–274 (ILFLNKKD). Residues 326 to 330 (TATDT) form a G5 motif region.

This sequence belongs to the G-alpha family. G(i/o/t/z) subfamily. In terms of assembly, g proteins are composed of 3 units; alpha, beta and gamma. The alpha chain contains the guanine nucleotide binding site.

Functionally, guanine nucleotide-binding proteins (G proteins) are involved as modulators or transducers in various transmembrane signaling systems. The G(o) protein function is not clear. In Manduca sexta (Tobacco hawkmoth), this protein is Guanine nucleotide-binding protein G(o) subunit alpha.